A 191-amino-acid chain; its full sequence is Classical arabinogalactan protein 9 (191 aa).

The signal sequence occupies residues 1–20 (MARSFAIAVICIVLIAGVTG). Positions 20 to 172 (GQAPTSPPTA…SPTDVNDQNG (153 aa)) are disordered. Glutamine 21 is modified (pyrrolidone carboxylic acid). Proline 23, proline 26, proline 27, proline 31, and proline 33 each carry 4-hydroxyproline. Pro residues predominate over residues 24–146 (TSPPTATPAP…PSPSSSPPLP (123 aa)). 4 O-linked (Ara...) hydroxyproline glycosylation sites follow: proline 26, proline 27, proline 31, and proline 33. Over residues 155 to 172 (TDSISPAPSPTDVNDQNG) the composition is skewed to polar residues. Glycine 172 carries GPI-anchor amidated glycine lipidation. Residues 173–191 (ASKMVSSLVFGSVLVWFMI) constitute a propeptide, removed in mature form.

The protein belongs to the classical AGP family. In terms of processing, O-glycosylated on hydroxyprolines; noncontiguous hydroxylproline residues are glycosylated with arabinogalactan. As to expression, predominantly expressed in flowers and at a lower level in leaves and siliques.

Its subcellular location is the cell membrane. Functionally, proteoglycan that seems to be implicated in diverse developmental roles such as differentiation, cell-cell recognition, embryogenesis and programmed cell death. The chain is Classical arabinogalactan protein 9 (AGP9) from Arabidopsis thaliana (Mouse-ear cress).